A 213-amino-acid polypeptide reads, in one-letter code: Probable nicotinate-nucleotide adenylyltransferase (213 aa).

The protein belongs to the NadD family.

The enzyme catalyses nicotinate beta-D-ribonucleotide + ATP + H(+) = deamido-NAD(+) + diphosphate. It functions in the pathway cofactor biosynthesis; NAD(+) biosynthesis; deamido-NAD(+) from nicotinate D-ribonucleotide: step 1/1. Its function is as follows. Catalyzes the reversible adenylation of nicotinate mononucleotide (NaMN) to nicotinic acid adenine dinucleotide (NaAD). The polypeptide is Probable nicotinate-nucleotide adenylyltransferase (Citrobacter koseri (strain ATCC BAA-895 / CDC 4225-83 / SGSC4696)).